Consider the following 158-residue polypeptide: Endoribonuclease YbeY (158 aa).

H119, H123, and D129 together coordinate Zn(2+).

It belongs to the endoribonuclease YbeY family. Zn(2+) serves as cofactor.

The protein resides in the cytoplasm. Its function is as follows. Single strand-specific metallo-endoribonuclease involved in late-stage 70S ribosome quality control and in maturation of the 3' terminus of the 16S rRNA. The polypeptide is Endoribonuclease YbeY (Chlamydia felis (strain Fe/C-56) (Chlamydophila felis)).